Here is a 165-residue protein sequence, read N- to C-terminus: Cyanate hydratase (165 aa).

Positions 1–20 are disordered; that stretch reads MAQNKANTVSQLQSLKNKSG. Residues arginine 90, glutamate 93, and serine 116 contribute to the active site.

The protein belongs to the cyanase family.

The catalysed reaction is cyanate + hydrogencarbonate + 3 H(+) = NH4(+) + 2 CO2. Catalyzes the reaction of cyanate with bicarbonate to produce ammonia and carbon dioxide. The polypeptide is Cyanate hydratase (Medicago truncatula (Barrel medic)).